We begin with the raw amino-acid sequence, 149 residues long: D-aminoacyl-tRNA deacylase (149 aa).

Positions 137-138 (GP) match the Gly-cisPro motif, important for rejection of L-amino acids motif.

This sequence belongs to the DTD family. In terms of assembly, homodimer.

The protein localises to the cytoplasm. The catalysed reaction is glycyl-tRNA(Ala) + H2O = tRNA(Ala) + glycine + H(+). The enzyme catalyses a D-aminoacyl-tRNA + H2O = a tRNA + a D-alpha-amino acid + H(+). Functionally, an aminoacyl-tRNA editing enzyme that deacylates mischarged D-aminoacyl-tRNAs. Also deacylates mischarged glycyl-tRNA(Ala), protecting cells against glycine mischarging by AlaRS. Acts via tRNA-based rather than protein-based catalysis; rejects L-amino acids rather than detecting D-amino acids in the active site. By recycling D-aminoacyl-tRNA to D-amino acids and free tRNA molecules, this enzyme counteracts the toxicity associated with the formation of D-aminoacyl-tRNA entities in vivo and helps enforce protein L-homochirality. The chain is D-aminoacyl-tRNA deacylase from Thermoanaerobacter sp. (strain X514).